We begin with the raw amino-acid sequence, 222 residues long: dTTP/UTP pyrophosphatase (222 aa).

The active-site Proton acceptor is the Asp83.

The protein belongs to the Maf family. YhdE subfamily. It depends on a divalent metal cation as a cofactor.

It localises to the cytoplasm. It catalyses the reaction dTTP + H2O = dTMP + diphosphate + H(+). The catalysed reaction is UTP + H2O = UMP + diphosphate + H(+). In terms of biological role, nucleoside triphosphate pyrophosphatase that hydrolyzes dTTP and UTP. May have a dual role in cell division arrest and in preventing the incorporation of modified nucleotides into cellular nucleic acids. The chain is dTTP/UTP pyrophosphatase from Desulfitobacterium hafniense (strain Y51).